The following is a 253-amino-acid chain: 5'/3'-nucleotidase SurE (253 aa).

The a divalent metal cation site is built by aspartate 8, aspartate 9, serine 39, and asparagine 92.

It belongs to the SurE nucleotidase family. It depends on a divalent metal cation as a cofactor.

The protein resides in the cytoplasm. The enzyme catalyses a ribonucleoside 5'-phosphate + H2O = a ribonucleoside + phosphate. It catalyses the reaction a ribonucleoside 3'-phosphate + H2O = a ribonucleoside + phosphate. It carries out the reaction [phosphate](n) + H2O = [phosphate](n-1) + phosphate + H(+). Functionally, nucleotidase with a broad substrate specificity as it can dephosphorylate various ribo- and deoxyribonucleoside 5'-monophosphates and ribonucleoside 3'-monophosphates with highest affinity to 3'-AMP. Also hydrolyzes polyphosphate (exopolyphosphatase activity) with the preference for short-chain-length substrates (P20-25). Might be involved in the regulation of dNTP and NTP pools, and in the turnover of 3'-mononucleotides produced by numerous intracellular RNases (T1, T2, and F) during the degradation of various RNAs. The sequence is that of 5'/3'-nucleotidase SurE from Sodalis glossinidius (strain morsitans).